Consider the following 535-residue polypeptide: Bifunctional purine biosynthesis protein PurH (535 aa).

Residues 6-151 (TRLPIRRALI…KNHKDVAIVV (146 aa)) form the MGS-like domain.

It belongs to the PurH family.

It carries out the reaction (6R)-10-formyltetrahydrofolate + 5-amino-1-(5-phospho-beta-D-ribosyl)imidazole-4-carboxamide = 5-formamido-1-(5-phospho-D-ribosyl)imidazole-4-carboxamide + (6S)-5,6,7,8-tetrahydrofolate. The catalysed reaction is IMP + H2O = 5-formamido-1-(5-phospho-D-ribosyl)imidazole-4-carboxamide. The protein operates within purine metabolism; IMP biosynthesis via de novo pathway; 5-formamido-1-(5-phospho-D-ribosyl)imidazole-4-carboxamide from 5-amino-1-(5-phospho-D-ribosyl)imidazole-4-carboxamide (10-formyl THF route): step 1/1. It functions in the pathway purine metabolism; IMP biosynthesis via de novo pathway; IMP from 5-formamido-1-(5-phospho-D-ribosyl)imidazole-4-carboxamide: step 1/1. The chain is Bifunctional purine biosynthesis protein PurH from Pseudomonas fluorescens (strain SBW25).